Consider the following 466-residue polypeptide: Phytase A (466 aa).

The signal sequence occupies residues 1–19 (MGFLAIVLSVALLFRSTSG). Cys-31 and Cys-40 are joined by a disulfide. 5 residues coordinate 1D-myo-inositol hexakisphosphate: Tyr-51, Arg-81, His-82, Arg-85, and Thr-88. 4 cysteine pairs are disulfide-bonded: Cys-71–Cys-414, Cys-215–Cys-465, Cys-264–Cys-282, and Cys-436–Cys-444. The active-site Nucleophile is His-82. N-linked (GlcNAc...) asparagine glycosylation is present at Asn-120. A 1D-myo-inositol hexakisphosphate-binding site is contributed by Arg-165. N-linked (GlcNAc...) asparagine glycans are attached at residues Asn-207 and Asn-230. Lys-301 is a binding site for 1D-myo-inositol hexakisphosphate. 2 N-linked (GlcNAc...) asparagine glycosylation sites follow: Asn-339 and Asn-352. Residues His-361 and Asp-362 each contribute to the 1D-myo-inositol hexakisphosphate site. N-linked (GlcNAc...) asparagine glycosylation occurs at Asn-376.

The protein belongs to the histidine acid phosphatase family. Monomer.

The protein localises to the secreted. The catalysed reaction is 1D-myo-inositol hexakisphosphate + H2O = 1D-myo-inositol 1,2,4,5,6-pentakisphosphate + phosphate. The enzyme catalyses 1D-myo-inositol 1,2,4,5,6-pentakisphosphate + H2O = 1D-myo-inositol 1,2,5,6-tetrakisphosphate + phosphate. It catalyses the reaction 1D-myo-inositol 1,2,5,6-tetrakisphosphate + H2O = 1D-myo-inositol 1,2,6-trisphosphate + phosphate. It carries out the reaction 1D-myo-inositol 1,2,6-trisphosphate + H2O = 1D-myo-inositol 1,2-bisphosphate + phosphate. The catalysed reaction is 1D-myo-inositol 1,2-bisphosphate + H2O = 1D-myo-inositol 2-phosphate + phosphate. Functionally, catalyzes the phosphate monoester hydrolysis of phytic acid (myo-inositol hexakisphosphate), which results in the stepwise formation of myo-inositol pentakis-, tetrakis-, tris-, bis-, and monophosphates, as well as the liberation of inorganic phosphate. Myo-inositol 2-monophosphate is the end product. Has a broad substrate specificity and is also able to dephosphorylate other classic acid phosphatase substrates such as p-nitrophenyl phosphate, phenyl phosphate, fructose 1,6-bisphosphate, glucose 6-phosphate, 3-phosphoglycerate, as well as ADP and ATP. In Aspergillus terreus, this protein is Phytase A.